The sequence spans 747 residues: Phosphoribosylformylglycinamidine synthase subunit PurL (747 aa).

His-46 is an active-site residue. Residues Tyr-49 and Lys-88 each coordinate ATP. A Mg(2+)-binding site is contributed by Glu-90. Substrate-binding positions include 91–94 (SHNH) and Arg-113. The active-site Proton acceptor is the His-92. Residue Asp-114 coordinates Mg(2+). Residue Gln-237 participates in substrate binding. Residue Asp-265 participates in Mg(2+) binding. Residue 309–311 (ESQ) coordinates substrate. Residues Asp-493 and Gly-530 each coordinate ATP. Asn-531 contacts Mg(2+). Residue Ser-533 coordinates substrate.

It belongs to the FGAMS family. As to quaternary structure, monomer. Part of the FGAM synthase complex composed of 1 PurL, 1 PurQ and 2 PurS subunits.

It localises to the cytoplasm. The catalysed reaction is N(2)-formyl-N(1)-(5-phospho-beta-D-ribosyl)glycinamide + L-glutamine + ATP + H2O = 2-formamido-N(1)-(5-O-phospho-beta-D-ribosyl)acetamidine + L-glutamate + ADP + phosphate + H(+). The protein operates within purine metabolism; IMP biosynthesis via de novo pathway; 5-amino-1-(5-phospho-D-ribosyl)imidazole from N(2)-formyl-N(1)-(5-phospho-D-ribosyl)glycinamide: step 1/2. Functionally, part of the phosphoribosylformylglycinamidine synthase complex involved in the purines biosynthetic pathway. Catalyzes the ATP-dependent conversion of formylglycinamide ribonucleotide (FGAR) and glutamine to yield formylglycinamidine ribonucleotide (FGAM) and glutamate. The FGAM synthase complex is composed of three subunits. PurQ produces an ammonia molecule by converting glutamine to glutamate. PurL transfers the ammonia molecule to FGAR to form FGAM in an ATP-dependent manner. PurS interacts with PurQ and PurL and is thought to assist in the transfer of the ammonia molecule from PurQ to PurL. In Deinococcus radiodurans (strain ATCC 13939 / DSM 20539 / JCM 16871 / CCUG 27074 / LMG 4051 / NBRC 15346 / NCIMB 9279 / VKM B-1422 / R1), this protein is Phosphoribosylformylglycinamidine synthase subunit PurL.